Consider the following 345-residue polypeptide: Biotin synthase (345 aa).

In terms of domain architecture, Radical SAM core spans 67–295 (YKVQLASLLS…KSRIRLSAGR (229 aa)). 3 residues coordinate [4Fe-4S] cluster: cysteine 82, cysteine 86, and cysteine 89. [2Fe-2S] cluster is bound by residues cysteine 126, cysteine 158, cysteine 218, and arginine 290.

It belongs to the radical SAM superfamily. Biotin synthase family. In terms of assembly, homodimer. [4Fe-4S] cluster serves as cofactor. It depends on [2Fe-2S] cluster as a cofactor.

The enzyme catalyses (4R,5S)-dethiobiotin + (sulfur carrier)-SH + 2 reduced [2Fe-2S]-[ferredoxin] + 2 S-adenosyl-L-methionine = (sulfur carrier)-H + biotin + 2 5'-deoxyadenosine + 2 L-methionine + 2 oxidized [2Fe-2S]-[ferredoxin]. It participates in cofactor biosynthesis; biotin biosynthesis; biotin from 7,8-diaminononanoate: step 2/2. Functionally, catalyzes the conversion of dethiobiotin (DTB) to biotin by the insertion of a sulfur atom into dethiobiotin via a radical-based mechanism. This Prochlorococcus marinus (strain NATL1A) protein is Biotin synthase.